The primary structure comprises 204 residues: Methyl-CpG-binding domain protein 3-like 2B (204 aa).

Residues 126–137 (SLDRAGAERVRS) show a composition bias toward basic and acidic residues. The tract at residues 126-145 (SLDRAGAERVRSPLEPTPGR) is disordered.

This sequence belongs to the MBD3L family.

This Homo sapiens (Human) protein is Methyl-CpG-binding domain protein 3-like 2B.